A 599-amino-acid polypeptide reads, in one-letter code: Sulfite reductase [NADPH] flavoprotein alpha-component (599 aa).

In terms of domain architecture, Flavodoxin-like spans 64-202 (ITIISASQTG…AASEWRARVV (139 aa)). FMN-binding positions include 70–75 (SQTGNA), 117–120 (STQG), and 153–162 (LGDSSYEFFC). The 215-residue stretch at 234-448 (DAPLVASLSV…IEHNDNFRLP (215 aa)) folds into the FAD-binding FR-type domain. FAD is bound by residues T322, A356, 386 to 389 (RLYS), 404 to 406 (TVG), Y410, and 419 to 422 (GGAS). Residues 519 to 520 (SR), 525 to 529 (KVYVQ), and D561 each bind NADP(+). An FAD-binding site is contributed by Y599.

Belongs to the NADPH-dependent sulphite reductase flavoprotein subunit CysJ family. It in the N-terminal section; belongs to the flavodoxin family. This sequence in the C-terminal section; belongs to the flavoprotein pyridine nucleotide cytochrome reductase family. As to quaternary structure, alpha(8)-beta(8). The alpha component is a flavoprotein, the beta component is a hemoprotein. FAD is required as a cofactor. It depends on FMN as a cofactor.

It catalyses the reaction hydrogen sulfide + 3 NADP(+) + 3 H2O = sulfite + 3 NADPH + 4 H(+). It functions in the pathway sulfur metabolism; hydrogen sulfide biosynthesis; hydrogen sulfide from sulfite (NADPH route): step 1/1. Its function is as follows. Component of the sulfite reductase complex that catalyzes the 6-electron reduction of sulfite to sulfide. This is one of several activities required for the biosynthesis of L-cysteine from sulfate. The flavoprotein component catalyzes the electron flow from NADPH -&gt; FAD -&gt; FMN to the hemoprotein component. The chain is Sulfite reductase [NADPH] flavoprotein alpha-component from Escherichia coli (strain K12).